The chain runs to 272 residues: Low-density lipoprotein receptor class A domain-containing protein 2 (272 aa).

Residues 1–25 form the signal peptide; sequence MEACCLLQLPQRLLLLGAAALTATA. The Extracellular segment spans residues 26-233; sequence LETADLAELC…GSTDAHTSRS (208 aa). N-linked (GlcNAc...) asparagine glycosylation is present at Asn-97. The region spanning 172–214 is the LDL-receptor class A domain; the sequence is PCGAYFRCQNGRCIPSSLVCDPWGMDNCGDGSDQGSWSPADCR. 3 disulfide bridges follow: Cys-173-Cys-184, Cys-179-Cys-199, and Cys-191-Cys-213. The segment at 202 to 272 is disordered; the sequence is GSDQGSWSPA…QDAALEGSTE (71 aa). A compositionally biased stretch (polar residues) spans 220 to 236; the sequence is PSQTGSTDAHTSRSLTP. The chain crosses the membrane as a helical span at residues 234–250; it reads LTPSPALGSAGSLWIAA. Residues 251 to 272 are Cytoplasmic-facing; that stretch reads ERSSPAGRDPTRQDAALEGSTE.

Belongs to the LDLR family.

The protein localises to the membrane. This Homo sapiens (Human) protein is Low-density lipoprotein receptor class A domain-containing protein 2 (LDLRAD2).